A 179-amino-acid polypeptide reads, in one-letter code: Large ribosomal subunit protein uL6 (179 aa).

The protein belongs to the universal ribosomal protein uL6 family. In terms of assembly, part of the 50S ribosomal subunit.

Its function is as follows. This protein binds to the 23S rRNA, and is important in its secondary structure. It is located near the subunit interface in the base of the L7/L12 stalk, and near the tRNA binding site of the peptidyltransferase center. This Acidothermus cellulolyticus (strain ATCC 43068 / DSM 8971 / 11B) protein is Large ribosomal subunit protein uL6.